The following is a 398-amino-acid chain: cAMP-dependent protein kinase, catalytic subunit-like (398 aa).

Positions leucine 90–phenylalanine 344 constitute a Protein kinase domain. Residues isoleucine 96–valine 104 and lysine 119 each bind ATP. Aspartate 213 functions as the Proton acceptor in the catalytic mechanism. The AGC-kinase C-terminal domain occupies glutamate 345–tryptophan 398.

It belongs to the protein kinase superfamily. Ser/Thr protein kinase family. cAMP subfamily.

It catalyses the reaction L-seryl-[protein] + ATP = O-phospho-L-seryl-[protein] + ADP + H(+). The enzyme catalyses L-threonyl-[protein] + ATP = O-phospho-L-threonyl-[protein] + ADP + H(+). This chain is cAMP-dependent protein kinase, catalytic subunit-like, found in Caenorhabditis elegans.